Here is a 176-residue protein sequence, read N- to C-terminus: Large ribosomal subunit protein uL6 (176 aa).

The protein belongs to the universal ribosomal protein uL6 family. As to quaternary structure, part of the 50S ribosomal subunit.

In terms of biological role, this protein binds to the 23S rRNA, and is important in its secondary structure. It is located near the subunit interface in the base of the L7/L12 stalk, and near the tRNA binding site of the peptidyltransferase center. The protein is Large ribosomal subunit protein uL6 of Burkholderia multivorans (strain ATCC 17616 / 249).